We begin with the raw amino-acid sequence, 1770 residues long: Serine/threonine-protein kinase RIM15 (1770 aa).

The disordered stretch occupies residues 334–358; sequence HSLSTFPQDNGNNNNNNNNNNNNNN. The segment covering 343-358 has biased composition (low complexity); sequence NGNNNNNNNNNNNNNN. Phosphoserine occurs at positions 380 and 476. Disordered regions lie at residues 530 to 563 and 583 to 694; these read TPTANDIRHPSPLPRSCSNTVMKLPTPRRKLDSN and STIS…NSVL. A compositionally biased stretch (polar residues) spans 583 to 601; the sequence is STISIDRDNNTNSRGSSMK. Low complexity predominate over residues 611–632; sequence SRTSNSERPSSSSSRLGIRSRS. Residues 637–660 are compositionally biased toward basic and acidic residues; sequence QKIEYSHVDNDDRTNEMLSRDKDS. A compositionally biased stretch (low complexity) spans 669–692; the sequence is TTITSSTQATTTGTKTNSNNSTNS. Thr704 is subject to Phosphothreonine. Residues Ser709, Ser733, Ser736, and Ser737 each carry the phosphoserine modification. Position 747 is a phosphothreonine (Thr747). A Protein kinase domain is found at 794–1254; that stretch reads YDILKPISKG…IQEIKDHPYF (461 aa). ATP-binding positions include 800–808 and Lys823; that span reads ISKGAYGSV. The Proton acceptor role is filled by Asp918. A compositionally biased stretch (low complexity) spans 970–980; that stretch reads NNFTMNNNNSN. The interval 970–1032 is disordered; it reads NNFTMNNNNS…MTPTPSTNTV (63 aa). The span at 981–990 shows a compositional bias: polar residues; sequence HSQLSTPDSF. Over residues 1014-1031 the composition is skewed to low complexity; the sequence is YSSTSNSHSMTPTPSTNT. Phosphoserine occurs at positions 1044, 1048, and 1064. Residue Thr1075 is modified to Phosphothreonine; by PHO85. The AGC-kinase C-terminal domain occupies 1255 to 1320; it reads KNVDWDHVYD…NTDVSELSAA (66 aa). A compositionally biased stretch (low complexity) spans 1378–1391; sequence TGYITPNGTGTTTT. The tract at residues 1378–1403 is disordered; it reads TGYITPNGTGTTTTSAKNSPNLKNLS. The segment covering 1392 to 1401 has biased composition (polar residues); that stretch reads SAKNSPNLKN. The residue at position 1421 (Ser1421) is a Phosphoserine. 2 disordered regions span residues 1448 to 1507 and 1519 to 1572; these read KSEH…STFG and FSTR…PANT. Low complexity predominate over residues 1463–1481; sequence SSASLMGSSSDGSVSTPGS. Phosphoserine is present on residues Ser1531, Ser1538, Ser1542, and Ser1565. In terms of domain architecture, Response regulatory spans 1636–1750; the sequence is DVLVCEPIPI…ELKKLVAKYA (115 aa). Position 1764 is a phosphoserine (Ser1764).

The protein belongs to the protein kinase superfamily. Ser/Thr protein kinase family. Interacts with the cyclin-dependent kinase (CDK) PHO85 and IGO1. Autophosphorylated. Phosphorylation by PKA strongly inhibits kinase activity. Phosphorylation by cyclin-CDK PHO80-PHO85 under favorable growth condition causes inactivation of RIM15 by promoting its export to the cytoplasm.

It localises to the cytoplasm. The protein resides in the nucleus. It catalyses the reaction L-seryl-[protein] + ATP = O-phospho-L-seryl-[protein] + ADP + H(+). It carries out the reaction L-threonyl-[protein] + ATP = O-phospho-L-threonyl-[protein] + ADP + H(+). With respect to regulation, kinase activity is inhibited by phosphorylation by cAMP-dependent protein kinase (PKA). Protein kinase that positively regulates proper entry into stationary phase of cells under nutrient starvation conditions. Involved in glycogen and trehalose accumulation, derepression of stress-induced genes, induction of thermotolerance and starvation resistance, and proper G1 cell cycle arrest. Also involved in the activation of a meiotic genes activation pathway. Phosphorylates IGO1 and IGO2, both involved in the TORC1 control of gene expression and chronological life span. This is Serine/threonine-protein kinase RIM15 (RIM15) from Saccharomyces cerevisiae (strain ATCC 204508 / S288c) (Baker's yeast).